The chain runs to 1496 residues: DNA-directed RNA polymerase subunit beta' (1496 aa).

The Zn(2+) site is built by C67, C69, C82, and C85. Residues D499, D501, and D503 each coordinate Mg(2+). The Zn(2+) site is built by C867, C943, C950, and C953.

This sequence belongs to the RNA polymerase beta' chain family. In terms of assembly, the RNAP catalytic core consists of 2 alpha, 1 beta, 1 beta' and 1 omega subunit. When a sigma factor is associated with the core the holoenzyme is formed, which can initiate transcription. Requires Mg(2+) as cofactor. It depends on Zn(2+) as a cofactor.

It catalyses the reaction RNA(n) + a ribonucleoside 5'-triphosphate = RNA(n+1) + diphosphate. In terms of biological role, DNA-dependent RNA polymerase catalyzes the transcription of DNA into RNA using the four ribonucleoside triphosphates as substrates. The chain is DNA-directed RNA polymerase subunit beta' from Chlorobium limicola (strain DSM 245 / NBRC 103803 / 6330).